Reading from the N-terminus, the 201-residue chain is Protein tirC (201 aa).

A TIR domain is found at 52-186 (ERIKVFIVHG…YVWINYTEDL (135 aa)).

In Dictyostelium discoideum (Social amoeba), this protein is Protein tirC (tirC).